The primary structure comprises 506 residues: GMP synthase [glutamine-hydrolyzing] (506 aa).

In terms of domain architecture, Glutamine amidotransferase type-1 spans 4–192; sequence KLIILDFGSQ…FLDICGMKRD (189 aa). Catalysis depends on cysteine 79, which acts as the Nucleophile. Active-site residues include histidine 167 and glutamate 169. The GMPS ATP-PPase domain occupies 193–381; that stretch reads WTPASFIEAT…LGMMPHLIHR (189 aa). An ATP-binding site is contributed by 220-226; that stretch reads SGGVDSS.

In terms of assembly, homodimer.

The catalysed reaction is XMP + L-glutamine + ATP + H2O = GMP + L-glutamate + AMP + diphosphate + 2 H(+). Its pathway is purine metabolism; GMP biosynthesis; GMP from XMP (L-Gln route): step 1/1. Catalyzes the synthesis of GMP from XMP. In Porphyromonas gingivalis (strain ATCC BAA-308 / W83), this protein is GMP synthase [glutamine-hydrolyzing].